We begin with the raw amino-acid sequence, 62 residues long: Conotoxin Pn-B02 (62 aa).

Residues 1–19 (MRCLPVFIILLLLIASAPS) form the signal peptide. Positions 20–49 (FDALPKTEDNVPLSSFHDNLKRTRRIHLNI) are excised as a propeptide. Position 61 is an alanine amide (alanine 61).

Belongs to the conotoxin T superfamily. Post-translationally, contains 2 disulfide bonds that can be either 'C1-C3, C2-C4' or 'C1-C4, C2-C3', since these disulfide connectivities have been observed for conotoxins with cysteine framework V (for examples, see AC P0DQQ7 and AC P81755). As to expression, expressed by the venom duct.

The protein localises to the secreted. In Conus pennaceus (Feathered cone), this protein is Conotoxin Pn-B02.